The primary structure comprises 236 residues: Pyridoxal phosphate homeostasis protein (236 aa).

Position 36 is an N6-(pyridoxal phosphate)lysine (Lys36).

Belongs to the pyridoxal phosphate-binding protein YggS/PROSC family.

Its function is as follows. Pyridoxal 5'-phosphate (PLP)-binding protein, which is involved in PLP homeostasis. The protein is Pyridoxal phosphate homeostasis protein of Vibrio cholerae serotype O1 (strain ATCC 39315 / El Tor Inaba N16961).